A 259-amino-acid chain; its full sequence is Pro-opiomelanocortin (259 aa).

The first 22 residues, 1-22, serve as a signal peptide directing secretion; that stretch reads MLRSVWVYSLGLAVLLQQSGRE. Gln-23 carries the pyrrolidone carboxylic acid modification. Cystine bridges form between Cys-24–Cys-46 and Cys-30–Cys-42. The disordered stretch occupies residues 113–142; that stretch reads PQAEEEMEESESSQQQRREDKRSYSMEHFR. Over residues 128 to 142 the composition is skewed to basic and acidic residues; that stretch reads QRREDKRSYSMEHFR. At Val-147 the chain carries Valine amide.

Belongs to the POMC family. Post-translationally, specific enzymatic cleavages at paired basic residues yield the different active peptides.

It is found in the secreted. In terms of biological role, stimulates the adrenal glands to release cortisol. Anorexigenic peptide. Increases the pigmentation of skin by increasing melanin production in melanocytes. Its function is as follows. Increases the pigmentation of skin by increasing melanin production in melanocytes. Functionally, endogenous orexigenic opiate. In terms of biological role, endogenous opiate. This is Pro-opiomelanocortin (pomc) from Lepisosteus osseus (Long-nosed gar).